Here is a 443-residue protein sequence, read N- to C-terminus: Methylenetetrahydrofolate--tRNA-(uracil-5-)-methyltransferase TrmFO (443 aa).

8-13 (GAGLAG) provides a ligand contact to FAD.

Belongs to the MnmG family. TrmFO subfamily. Requires FAD as cofactor.

The protein resides in the cytoplasm. It carries out the reaction uridine(54) in tRNA + (6R)-5,10-methylene-5,6,7,8-tetrahydrofolate + NADH + H(+) = 5-methyluridine(54) in tRNA + (6S)-5,6,7,8-tetrahydrofolate + NAD(+). It catalyses the reaction uridine(54) in tRNA + (6R)-5,10-methylene-5,6,7,8-tetrahydrofolate + NADPH + H(+) = 5-methyluridine(54) in tRNA + (6S)-5,6,7,8-tetrahydrofolate + NADP(+). Catalyzes the folate-dependent formation of 5-methyl-uridine at position 54 (M-5-U54) in all tRNAs. The polypeptide is Methylenetetrahydrofolate--tRNA-(uracil-5-)-methyltransferase TrmFO (Thermus thermophilus (strain ATCC BAA-163 / DSM 7039 / HB27)).